The primary structure comprises 469 residues: Glutamine synthetase (469 aa).

The region spanning 15 to 96 (EDVKFVDVRF…INFFIHDPIT (82 aa)) is the GS beta-grasp domain. Residues 104-469 (PRNVAKKAEA…PHEFEMYFDV (366 aa)) form the GS catalytic domain. 2 residues coordinate Mg(2+): Glu129 and Glu131. Position 205 (Glu205) interacts with ATP. Mg(2+) is bound by residues Glu210 and Glu218. 221-223 (YKF) lines the ATP pocket. L-glutamate contacts are provided by residues 262 to 263 (NG) and Gly263. Residue His267 coordinates Mg(2+). Residues 269–271 (HQS) and Ser271 each bind ATP. The L-glutamate site is built by Arg320, Glu326, and Arg338. Arg338, Arg343, and Lys352 together coordinate ATP. Glu357 lines the Mg(2+) pocket. Arg359 serves as a coordination point for L-glutamate. Tyr397 carries the post-translational modification O-AMP-tyrosine.

It belongs to the glutamine synthetase family. Oligomer of 12 subunits arranged in the form of two hexagons. Mg(2+) is required as a cofactor.

Its subcellular location is the cytoplasm. It catalyses the reaction L-glutamate + NH4(+) + ATP = L-glutamine + ADP + phosphate + H(+). The activity of this enzyme could be controlled by adenylation under conditions of abundant glutamine. Functionally, catalyzes the ATP-dependent biosynthesis of glutamine from glutamate and ammonia. Complements L-glutamine auxotrophy of an E.coli glnA mutant. The sequence is that of Glutamine synthetase from Streptomyces coelicolor (strain ATCC BAA-471 / A3(2) / M145).